A 199-amino-acid chain; its full sequence is Ribonuclease HII (199 aa).

The RNase H type-2 domain occupies 13 to 199 (GLVAGVDEVG…FAPIAKILCG (187 aa)). The a divalent metal cation site is built by D19, E20, and D110.

The protein belongs to the RNase HII family. It depends on Mn(2+) as a cofactor. Mg(2+) is required as a cofactor.

Its subcellular location is the cytoplasm. It catalyses the reaction Endonucleolytic cleavage to 5'-phosphomonoester.. Endonuclease that specifically degrades the RNA of RNA-DNA hybrids. In Jannaschia sp. (strain CCS1), this protein is Ribonuclease HII.